The following is a 791-amino-acid chain: Ataxin-2 homolog (791 aa).

The span at 1–22 (MATRSVSMKQTSQRAASPNKTQ) shows a compositional bias: polar residues. Disordered regions lie at residues 1 to 28 (MATR…KKWS), 60 to 100 (RGGV…QQRV), 112 to 134 (RTET…GVPL), 235 to 311 (TRSN…KEGQ), 326 to 423 (SLDS…TKLG), 452 to 505 (KPAP…PVSS), 613 to 634 (NPSQ…GNSS), and 707 to 791 (PMYG…EAKP). The span at 76-96 (SLASSEENVSSVSGSAKSNNS) shows a compositional bias: low complexity. 2 stretches are compositionally biased toward basic and acidic residues: residues 112–125 (RTET…RWMP) and 243–256 (NNKD…EAPH). The span at 326–337 (SLDSKQPSSTKS) shows a compositional bias: polar residues. 2 stretches are compositionally biased toward basic and acidic residues: residues 360–371 (DSKEPRKEEAEK) and 395–418 (SKEE…KETT). The span at 473-486 (SIPSTTPQSPSVVS) shows a compositional bias: low complexity. The segment covering 487–497 (NGENKPSSSPV) has biased composition (polar residues). Composition is skewed to low complexity over residues 715 to 725 (SNSQRSFNSSN) and 734 to 760 (NNNA…NTTA). Residues 774 to 791 (DATEKTEKDASANQEAKP) show a composition bias toward basic and acidic residues.

It belongs to the ataxin-2 family. In terms of assembly, interacts with mkt1.

It localises to the cytoplasm. Its function is as follows. Involved in post-transcriptional regulation of gene expression, probably by association with mkt1. The polypeptide is Ataxin-2 homolog (Schizosaccharomyces pombe (strain 972 / ATCC 24843) (Fission yeast)).